The chain runs to 313 residues: MGNELRHRTVLLDEAVESLVTRPDGVCVDGTFGRGGHSRAVLARLASAGRLIAFDKDPRAIETAQGIEDARFSIVHDSFASMRDALAARGVEKVSGVLLDLGVSSPQVDDPARGFSFRADGPLDMRMDPTRGESAAEWLARASVQELTEVIRDYGEERFAFQIAKALVARRAESDRLGPLDTTGELAQIVGHVVKTREKGKDPATRTFQAIRIHVNQELADLQVVLDAALSLLEQGGRLVVISFHSLEDRIVKRFMQAHASAPAVDRRLPIRAVDLPSPPLKIISRQFPSEAEVAANPRARSAVMRIAERVTP.

S-adenosyl-L-methionine-binding positions include 35-37, Asp55, Phe79, Asp100, and Gln107; that span reads GGH.

Belongs to the methyltransferase superfamily. RsmH family.

The protein localises to the cytoplasm. The catalysed reaction is cytidine(1402) in 16S rRNA + S-adenosyl-L-methionine = N(4)-methylcytidine(1402) in 16S rRNA + S-adenosyl-L-homocysteine + H(+). Functionally, specifically methylates the N4 position of cytidine in position 1402 (C1402) of 16S rRNA. The polypeptide is Ribosomal RNA small subunit methyltransferase H (Burkholderia orbicola (strain AU 1054)).